Consider the following 894-residue polypeptide: Microsomal triglyceride transfer protein large subunit (894 aa).

The first 18 residues, 1–18 (MILLAVLFLCFISSYSAS), serve as a signal peptide directing secretion. The Vitellogenin domain occupies 28-659 (LNNDRLYKLT…IFQYIGKAGL (632 aa)). A disulfide bridge connects residues C174 and C194.

In terms of assembly, heterodimer; heterodimerizes with the protein disulfide isomerase (P4HB/PDI). Interacts with APOB. Interacts with PRAP1. As to expression, liver and small intestine. Also found in ovary, testis and kidney.

It localises to the endoplasmic reticulum. Its subcellular location is the golgi apparatus. It carries out the reaction a 1,2-diacyl-sn-glycero-3-phosphocholine(in) = a 1,2-diacyl-sn-glycero-3-phosphocholine(out). The enzyme catalyses a 1,2-diacyl-sn-glycero-3-phosphoethanolamine(in) = a 1,2-diacyl-sn-glycero-3-phosphoethanolamine(out). It catalyses the reaction a cholesterol ester(in) = a cholesterol ester(out). The catalysed reaction is a triacyl-sn-glycerol(in) = a triacyl-sn-glycerol(out). Catalyzes the transport of triglyceride, cholesteryl ester, and phospholipid between phospholipid surfaces. Required for the assembly and secretion of plasma lipoproteins that contain apolipoprotein B. May be involved in regulating cholesteryl ester biosynthesis in cells that produce lipoproteins. The chain is Microsomal triglyceride transfer protein large subunit (MTTP) from Homo sapiens (Human).